The primary structure comprises 592 residues: MALEPIDYTTHSREIDAEYLKIVRGSDPDTTWLIISPNAKKEYEPESTGSSFHDFLQLFDETKVQYGLARVSPPGSDVEKIIIIGWCPDSAPLKTRASFAANFAAVANNLFKGYHVQVTARDEDDLDENELLMKISNAAGARYSIQTSSKQQGKASTPPVKKSFTPSKSPAPVSKKEPVKTPSPAPAAKISSRVNDNNDDDDWNEPELKERDFDQAPLKPNQSSYKPIGKIDLQKVIAEEKAKEDPRLVQKPTAAGSKIDPSSDIANLKNESKLKRDSEFNSFLGTTKPPSMTESSLKNDDDKVIKGFRNEKSPAQLWAERKAKQNSGNAETKAEAPKPEVPEDEPEGEPDVKDLKSKFEGLAASEKEEEEMENKFAPPPKKSEPTIISPKPFSKPQEPVKAEEAEQPKTDYKKIGNPLPGMHIEADNEEEPEENDDDWDDDEDEAAQPPLPSRNVASGAPVQKEEPEQEEIAPSLPSRNSIPAPKQEEAPEQAPEEEIEEEAEEAAPQLPSRSSAAPPPPPRRATPEKKPKENPWATAEYDYDAAEDNELTFVENDKIINIEFVDDDWWLGELEKDGSKGLFPSNYVSLGN.

Ala-2 bears the N-acetylalanine mark. The ADF-H domain occupies 7 to 136 (DYTTHSREID…DENELLMKIS (130 aa)). Polar residues predominate over residues 144–155 (SIQTSSKQQGKA). The tract at residues 144–541 (SIQTSSKQQG…KENPWATAEY (398 aa)) is disordered. Thr-165 carries the phosphothreonine modification. Residues Ser-167 and Ser-169 each carry the phosphoserine modification. Thr-181 carries the phosphothreonine modification. Ser-183 carries the phosphoserine modification. Residues 200 to 209 (DDDWNEPELK) form repeat 1. The interval 200–575 (DDDWNEPELK…DDDWWLGELE (376 aa)) is 3 X 10 AA approximate repeats (acidic). 2 stretches are compositionally biased toward basic and acidic residues: residues 237–248 (IAEEKAKEDPRL) and 270–279 (NESKLKRDSE). Residues 280 to 296 (FNSFLGTTKPPSMTESS) show a composition bias toward polar residues. Basic and acidic residues predominate over residues 297–312 (LKNDDDKVIKGFRNEK). At Ser-313 the chain carries Phosphoserine. 2 stretches are compositionally biased toward basic and acidic residues: residues 332-341 (TKAEAPKPEV) and 350-359 (PDVKDLKSKF). Residues Ser-365 and Ser-389 each carry the phosphoserine modification. The segment covering 398–414 (EPVKAEEAEQPKTDYKK) has biased composition (basic and acidic residues). The span at 427-446 (DNEEEPEENDDDWDDDEDEA) shows a compositional bias: acidic residues. Repeat unit 2 spans residues 436–445 (DDDWDDDEDE). A Phosphoserine modification is found at Ser-458. A Glycyl lysine isopeptide (Lys-Gly) (interchain with G-Cter in ubiquitin) cross-link involves residue Lys-464. A Phosphoserine modification is found at Ser-481. Acidic residues predominate over residues 490–505 (APEQAPEEEIEEEAEE). Residues 506-516 (AAPQLPSRSSA) show a composition bias toward low complexity. The 61-residue stretch at 532–592 (KENPWATAEY…FPSNYVSLGN (61 aa)) folds into the SH3 domain. Residues 566–575 (DDDWWLGELE) form repeat 3.

This sequence belongs to the ABP1 family. In terms of assembly, binds F-actin, but not G-actin. Interacts with the ARP2/3 complex. Interacts with APP1, ARK1, PRK1, SCP1, SRV2 and YIR003W via its SH3 domain. Interacts with the SH3 domain of RVS167 and with SLA1. Post-translationally, the actin depolymerizing factor homology (ADF) domain mediates actin filament binding.

The protein localises to the cytoplasm. It is found in the cytoskeleton. The protein resides in the actin patch. Functionally, regulates ARP2/3 complex-mediated actin assembly. Recruits ARP2/3 complex to sides of preexisting actin filaments, which may promote nucleation or stabilization of filament branches. Binds to actin filaments, but not actin monomers. Actin binding is required for ARP2/3 complex activation. May also have a role in linking the actin cytoskeleton to endocytosis. recruits components of the endocytotic machinery to cortical actin patches, known sites of endocytosis. This Saccharomyces cerevisiae (strain ATCC 204508 / S288c) (Baker's yeast) protein is Actin-binding protein (ABP1).